A 463-amino-acid chain; its full sequence is Chaperone SurA (463 aa).

The signal sequence occupies residues 1 to 25; that stretch reads MTKPFSVLLASLLVITSTVSPLASA. 2 PpiC domains span residues 174-276 and 289-388; these read GSQY…KLVE and LTEY…QRVG. Disordered regions lie at residues 329–348 and 434–463; these read ATAK…GDLG and GDRA…QPTR. The segment covering 440–452 has biased composition (low complexity); the sequence is DATAAPEPAAAPA. Pro residues predominate over residues 453–463; that stretch reads APTPPPAQPTR.

It is found in the periplasm. It catalyses the reaction [protein]-peptidylproline (omega=180) = [protein]-peptidylproline (omega=0). In terms of biological role, chaperone involved in the correct folding and assembly of outer membrane proteins. Recognizes specific patterns of aromatic residues and the orientation of their side chains, which are found more frequently in integral outer membrane proteins. May act in both early periplasmic and late outer membrane-associated steps of protein maturation. This chain is Chaperone SurA, found in Xanthomonas campestris pv. campestris (strain 8004).